We begin with the raw amino-acid sequence, 445 residues long: 6-phosphogluconate dehydrogenase, decarboxylating (445 aa).

NADP(+)-binding positions include Ala1–Gly4, Asn22–Ser24, Val63–Ala65, and Asn91. Residues Asn91 and Ser117 to Gly119 each bind substrate. Lys172 functions as the Proton acceptor in the catalytic mechanism. His175 to Asn176 contributes to the substrate binding site. Glu179 (proton donor) is an active-site residue. Residues Tyr180, Lys249, Arg276, Arg434, and His440 each coordinate substrate.

This sequence belongs to the 6-phosphogluconate dehydrogenase family. Homodimer.

The enzyme catalyses 6-phospho-D-gluconate + NADP(+) = D-ribulose 5-phosphate + CO2 + NADPH. It participates in carbohydrate degradation; pentose phosphate pathway; D-ribulose 5-phosphate from D-glucose 6-phosphate (oxidative stage): step 3/3. In terms of biological role, catalyzes the oxidative decarboxylation of 6-phosphogluconate to ribulose 5-phosphate and CO(2), with concomitant reduction of NADP to NADPH. The chain is 6-phosphogluconate dehydrogenase, decarboxylating (gnd) from Shigella sonnei.